The chain runs to 317 residues: Acetyl-coenzyme A carboxylase carboxyl transferase subunit beta (317 aa).

A disordered region spans residues Met1–Ala28. Residues Pro55–Gln317 form the CoA carboxyltransferase N-terminal domain. Residues Cys59, Cys62, Cys78, and Cys81 each contribute to the Zn(2+) site. The segment at Cys59 to Cys81 adopts a C4-type zinc-finger fold.

Belongs to the AccD/PCCB family. In terms of assembly, acetyl-CoA carboxylase is a heterohexamer composed of biotin carboxyl carrier protein (AccB), biotin carboxylase (AccC) and two subunits each of ACCase subunit alpha (AccA) and ACCase subunit beta (AccD). Requires Zn(2+) as cofactor.

It localises to the cytoplasm. It catalyses the reaction N(6)-carboxybiotinyl-L-lysyl-[protein] + acetyl-CoA = N(6)-biotinyl-L-lysyl-[protein] + malonyl-CoA. It participates in lipid metabolism; malonyl-CoA biosynthesis; malonyl-CoA from acetyl-CoA: step 1/1. Functionally, component of the acetyl coenzyme A carboxylase (ACC) complex. Biotin carboxylase (BC) catalyzes the carboxylation of biotin on its carrier protein (BCCP) and then the CO(2) group is transferred by the transcarboxylase to acetyl-CoA to form malonyl-CoA. This is Acetyl-coenzyme A carboxylase carboxyl transferase subunit beta from Psychrobacter arcticus (strain DSM 17307 / VKM B-2377 / 273-4).